The sequence spans 702 residues: Arylphorin subunit alpha (702 aa).

The first 16 residues, 1–16 (MKTVVILAGLVALALS), serve as a signal peptide directing secretion. Residues Asn75 and Asn214 are each glycosylated (N-linked (GlcNAc...) asparagine).

The protein belongs to the hemocyanin family. In terms of assembly, arylphorin is a hexamer of subunits alpha and beta. As to expression, fat body.

Its subcellular location is the secreted. It is found in the extracellular space. Functionally, arylphorin is a larval storage protein (LSP) which may serve as a storage protein used primarily as a source of aromatic amino acids for protein synthesis during metamorphosis. It is a constituent of the sclerotizing system of the cuticle, and serves as a carrier for ecdysteroid hormone. This Manduca sexta (Tobacco hawkmoth) protein is Arylphorin subunit alpha.